We begin with the raw amino-acid sequence, 138 residues long: Large ribosomal subunit protein uL16 (138 aa).

Belongs to the universal ribosomal protein uL16 family. As to quaternary structure, part of the 50S ribosomal subunit.

In terms of biological role, binds 23S rRNA and is also seen to make contacts with the A and possibly P site tRNAs. In Anaeromyxobacter dehalogenans (strain 2CP-C), this protein is Large ribosomal subunit protein uL16.